Here is a 172-residue protein sequence, read N- to C-terminus: Epithelial membrane protein 2 (172 aa).

Helical transmembrane passes span 1–21 (MLVI…LLFI), 72–92 (TMIL…LQLF), 100–120 (FVLT…GASV), and 148–168 (FILA…YMIL).

This sequence belongs to the PMP-22/EMP/MP20 family. Interacts with PTK2; regulates PTK2 activation and localization. Interacts with ITGB3; regulates the levels of the heterodimer ITGA5-ITGB3 integrin surface expression. Interacts with P2RX7 (via C-terminus). Interacts with ITGB1; the interaction may be direct or indirect and ITGB1 has a heterodimer form. Expressed in glomeruli.

The protein localises to the golgi apparatus membrane. The protein resides in the cell membrane. Its subcellular location is the apical cell membrane. It localises to the membrane raft. It is found in the cytoplasm. The protein localises to the nucleus. The protein resides in the perinuclear region. Functions as a key regulator of cell membrane composition by regulating protein surface expression. Also, plays a role in regulation of processes including cell migration, cell proliferation, cell contraction and cell adhesion. Regulates transepithelial migration of neutrophils into the alveolar lumen, potentially via mediation of cell surface expression of adhesion markers and lipid raft formation. Negatively regulates caveolae formation by reducing CAV1 expression and CAV1 amount by increasing lysosomal degradation. Facilitates surface trafficking and the formation of lipid rafts bearing GPI-anchor proteins. Regulates surface expression of MHC1 and ICAM1 proteins increasing susceptibility to T-cell mediated cytotoxicity. Regulates the plasma membrane expression of the integrin heterodimers ITGA6-ITGB1, ITGA5-ITGB3 and ITGA5-ITGB1 resulting in modulation of cell-matrix adhesion. Also regulates many processes through PTK2. Regulates blood vessel endothelial cell migration and angiogenesis by regulating VEGF protein expression through PTK2 activation. Regulates cell migration and cell contraction through PTK2 and SRC activation. Regulates focal adhesion density, F-actin conformation and cell adhesion capacity through interaction with PTK2. Positively regulates cell proliferation. Plays a role during cell death and cell blebbing. Promotes angiogenesis and vasculogenesis through induction of VEGFA via a HIF1A-dependent pathway. Also plays a role in embryo implantation by regulating surface trafficking of integrin heterodimer ITGA5-ITGB3. Plays a role in placental angiogenesis and uterine natural killer cell regulation at the maternal-fetal placental interface, however not required in the maternal tissues for a viable pregnancy. Involved in the early stages of embryogenic development and cardiogenesis, potentially via regulation of epithelial-mesenchymal transition timing. May play a role in glomerular filtration. The protein is Epithelial membrane protein 2 (Emp2) of Rattus norvegicus (Rat).